Consider the following 83-residue polypeptide: Delta-conotoxin-like MVIC (83 aa).

An N-terminal signal peptide occupies residues 1–22 (MKLTCVMIVAVLFLTTWTFVTA). Positions 23–49 (DDSRYGLKNLFPKARHEMKNPEASKLN) are excised as a propeptide. Disulfide bonds link C54/C69, C61/C73, and C68/C78. 2 positions are modified to 4-hydroxyproline: P56 and P65.

The protein belongs to the conotoxin O1 superfamily. In terms of tissue distribution, expressed by the venom duct.

The protein localises to the secreted. Delta-conotoxins bind to site 6 of voltage-gated sodium channels (Nav) and inhibit the inactivation process. The protein is Delta-conotoxin-like MVIC of Conus magus (Magical cone).